Consider the following 248-residue polypeptide: 5'-nucleotidase SurE (248 aa).

A divalent metal cation is bound by residues aspartate 8, aspartate 9, serine 39, and asparagine 91.

Belongs to the SurE nucleotidase family. Requires a divalent metal cation as cofactor.

The protein resides in the cytoplasm. It carries out the reaction a ribonucleoside 5'-phosphate + H2O = a ribonucleoside + phosphate. Functionally, nucleotidase that shows phosphatase activity on nucleoside 5'-monophosphates. The chain is 5'-nucleotidase SurE from Neisseria meningitidis serogroup A / serotype 4A (strain DSM 15465 / Z2491).